Consider the following 164-residue polypeptide: Protein phosphatase 1 regulatory subunit 14C (164 aa).

Residues 1–19 show a composition bias toward gly residues; it reads MSVVTGGGEAAGGGGGGGA. A disordered region spans residues 1 to 70; that stretch reads MSVVTGGGEA…QQQRRHQQGK (70 aa). Serine 2 is subject to N-acetylserine. Serine 25 carries the post-translational modification Phosphoserine. Arginine 27 is subject to Omega-N-methylarginine. Serine 33 is modified (phosphoserine). Residues 50–62 show a composition bias toward low complexity; that stretch reads VTTVAAAGQVQQQ. Threonine 72 carries the post-translational modification Phosphothreonine; by ILK1.

Belongs to the PP1 inhibitor family. The main inhibitory site appears to be Thr-72. Has over 600-fold higher inhibitory activity when phosphorylated, creating a molecular switch for regulating the phosphorylation status of PPP1CA substrates and smooth muscle contraction. As to expression, detected in heart, muscle, spinal cord, hippocampus, hypothalamus, thalamus, midbrain, brain stem, cerebellum, brain cortex and olfactory bulb.

The protein resides in the endomembrane system. Inhibitor of the PP1 regulatory subunit PPP1CA. The polypeptide is Protein phosphatase 1 regulatory subunit 14C (Ppp1r14c) (Mus musculus (Mouse)).